The primary structure comprises 324 residues: Putative S-adenosyl-L-methionine-dependent methyltransferase MMAR_1059 (324 aa).

S-adenosyl-L-methionine is bound by residues Asp138 and 167-168 (DL).

The protein belongs to the UPF0677 family.

Exhibits S-adenosyl-L-methionine-dependent methyltransferase activity. This chain is Putative S-adenosyl-L-methionine-dependent methyltransferase MMAR_1059, found in Mycobacterium marinum (strain ATCC BAA-535 / M).